The primary structure comprises 573 residues: Solute carrier family 41 member 2 (573 aa).

Over 1 to 162 (MTNSKGRSIT…KESSGIMALQ (162 aa)) the chain is Extracellular. A phosphoserine mark is found at Ser-136 and Ser-137. Residues 163–183 (ILVPFLLAGFGTVSAGMVLDI) form a helical membrane-spanning segment. The Cytoplasmic portion of the chain corresponds to 184–195 (VQHWEVFRKVTE). A helical membrane pass occupies residues 196–216 (VFILVPALLGLKGNLEMTLAS). Residues 217 to 245 (RLSTAVNIGKMDSPIEKWNLIIGNLALKQ) lie on the Extracellular side of the membrane. A helical membrane pass occupies residues 246–266 (VQATVVGFLAAVAAIILGWIP). Topologically, residues 267-282 (EGKYYLDHSILLCSSS) are cytoplasmic. A helical transmembrane segment spans residues 283 to 303 (VATAFIASLLQGIIMVGVIVG). Over 304–313 (SKKTGINPDN) the chain is Extracellular. A helical transmembrane segment spans residues 314–334 (VATPIAASFGDLITLAILAWI). The Cytoplasmic segment spans residues 335-347 (SQGLYSCLETYYY). The chain crosses the membrane as a helical span at residues 348-368 (ISPLVGVFFLALTPIWIIIAA). Residues 369-376 (KHPATRTV) are Extracellular-facing. A helical transmembrane segment spans residues 377–397 (LHSGWEPVITAMVISSIGGLI). The Cytoplasmic segment spans residues 398–406 (LDTTVSDPN). The helical transmembrane segment at 407-427 (LVGIVVYTPVINGIGGNLVAI) threads the bilayer. Residues 428-469 (QASRISTYLHLHSIPGELPDEPKGCYYPFRTFFGPGVNNKSA) lie on the Extracellular side of the membrane. Residues 470–490 (QVLLLLVIPGHLIFLYTIHLM) form a helical membrane-spanning segment. The Cytoplasmic segment spans residues 491-498 (KSGHTSLT). The chain crosses the membrane as a helical span at residues 499–519 (IIFIVVYLFAAVLQVFTLLWI). At 520-543 (ADWMVHHFWRKGKDPDSFSIPYLT) the chain is on the extracellular side. Residues 544-564 (ALGDLLGTALLALSFHFLWLI) form a helical membrane-spanning segment. At 565–573 (GDRDGDVGD) the chain is on the cytoplasmic side.

Belongs to the SLC41A transporter family.

It is found in the cell membrane. It catalyses the reaction Mg(2+)(in) = Mg(2+)(out). The catalysed reaction is Mn(2+)(in) = Mn(2+)(out). It carries out the reaction Co(2+)(in) = Co(2+)(out). The enzyme catalyses Ni(2+)(in) = Ni(2+)(out). It catalyses the reaction Fe(2+)(in) = Fe(2+)(out). In terms of biological role, acts as a plasma-membrane magnesium transporter. Can also mediate the transport of other divalent metal cations in an order of Ba(2+) &gt; Ni(2+) &gt; Co(2+) &gt; Fe(2+) &gt; Mn(2+). The sequence is that of Solute carrier family 41 member 2 (SLC41A2) from Macaca fascicularis (Crab-eating macaque).